Here is an 84-residue protein sequence, read N- to C-terminus: Transcriptional regulator WhiB1 (84 aa).

The region spanning 8–70 (VCRDEDPELF…GGMSEDERRA (63 aa)) is the 4Fe-4S Wbl-type domain. Positions 9, 37, 40, and 46 each coordinate [4Fe-4S] cluster.

It belongs to the WhiB family. In terms of assembly, homodimer. [4Fe-4S] cluster is required as a cofactor. The Fe-S cluster can be nitrosylated by nitric oxide (NO). In terms of processing, upon Fe-S cluster removal intramolecular disulfide bonds are formed.

It is found in the cytoplasm. Its function is as follows. Acts as a transcriptional regulator. Probably redox-responsive. The apo- but not holo-form probably binds DNA. The polypeptide is Transcriptional regulator WhiB1 (whiB1) (Mycobacterium tuberculosis (strain CDC 1551 / Oshkosh)).